The primary structure comprises 184 residues: ATP-dependent protease subunit HslV (184 aa).

Thr8 is an active-site residue. Positions 165, 168, and 171 each coordinate Na(+).

It belongs to the peptidase T1B family. HslV subfamily. In terms of assembly, a double ring-shaped homohexamer of HslV is capped on each side by a ring-shaped HslU homohexamer. The assembly of the HslU/HslV complex is dependent on binding of ATP.

The protein localises to the cytoplasm. It catalyses the reaction ATP-dependent cleavage of peptide bonds with broad specificity.. With respect to regulation, allosterically activated by HslU binding. Its function is as follows. Protease subunit of a proteasome-like degradation complex believed to be a general protein degrading machinery. In Pediococcus pentosaceus (strain ATCC 25745 / CCUG 21536 / LMG 10740 / 183-1w), this protein is ATP-dependent protease subunit HslV.